Consider the following 554-residue polypeptide: Protein translocase subunit SecD (554 aa).

6 helical membrane passes run 10 to 30, 392 to 412, 414 to 434, 435 to 455, 491 to 511, and 516 to 536; these read LVIL…MFYA, AGMV…IASY, LFGF…FAVM, GAIG…TIGT, AIID…VLGA, and GFAV…IWVV.

The protein belongs to the SecD/SecF family. SecD subfamily. In terms of assembly, forms a complex with SecF. Part of the essential Sec protein translocation apparatus which comprises SecA, SecYEG and auxiliary proteins SecDF-YajC and YidC.

Its subcellular location is the cell inner membrane. In terms of biological role, part of the Sec protein translocase complex. Interacts with the SecYEG preprotein conducting channel. SecDF uses the proton motive force (PMF) to complete protein translocation after the ATP-dependent function of SecA. The polypeptide is Protein translocase subunit SecD (Rhodobacter capsulatus (strain ATCC BAA-309 / NBRC 16581 / SB1003)).